A 943-amino-acid chain; its full sequence is TBC1 domain family member 2B (943 aa).

The interval 1-29 (MPGVEDPCDSQGTPPEEPSTSVAPGEAAK) is disordered. Residues 10-22 (SQGTPPEEPSTSV) show a composition bias toward polar residues. The 98-residue stretch at 32–129 (SPRLCGYLAK…WLQELQQKRW (98 aa)) folds into the PH domain. Residues 315-514 (RMESDVLLKL…ARYSNLEAKM (200 aa)) are a coiled coil. Residues 642–836 (GIPHEHRSRM…RIWDSLLYEG (195 aa)) form the Rab-GAP TBC domain.

Its subcellular location is the early endosome. GTPase-activating protein that plays a role in the early steps of endocytosis. The sequence is that of TBC1 domain family member 2B (tbc1d2b) from Xenopus tropicalis (Western clawed frog).